A 186-amino-acid polypeptide reads, in one-letter code: ATP synthase subunit delta, cyanelle (186 aa).

Belongs to the ATPase delta chain family. As to quaternary structure, F-type ATPases have 2 components, F(1) - the catalytic core - and F(0) - the membrane proton channel. F(1) has five subunits: alpha(3), beta(3), gamma(1), delta(1), epsilon(1). CF(0) has four main subunits: a(1), b(1), b'(1) and c(10-14). The alpha and beta chains form an alternating ring which encloses part of the gamma chain. F(1) is attached to F(0) by a central stalk formed by the gamma and epsilon chains, while a peripheral stalk is formed by the delta, b and b' chains.

The protein localises to the plastid. The protein resides in the cyanelle thylakoid membrane. In terms of biological role, f(1)F(0) ATP synthase produces ATP from ADP in the presence of a proton or sodium gradient. F-type ATPases consist of two structural domains, F(1) containing the extramembraneous catalytic core and F(0) containing the membrane proton channel, linked together by a central stalk and a peripheral stalk. During catalysis, ATP synthesis in the catalytic domain of F(1) is coupled via a rotary mechanism of the central stalk subunits to proton translocation. Its function is as follows. This protein is part of the stalk that links CF(0) to CF(1). It either transmits conformational changes from CF(0) to CF(1) or is implicated in proton conduction. This chain is ATP synthase subunit delta, cyanelle, found in Cyanophora paradoxa.